Consider the following 316-residue polypeptide: Vacuolar membrane protein YNL058C (316 aa).

Positions Lys32–Ala60 are disordered. The chain crosses the membrane as a helical span at residues Val93–Leu113. Residues Ser148, Ser256, and Ser276 each carry the phosphoserine modification. Positions Glu240–Met304 are disordered. Over residues Ser256–His271 the composition is skewed to basic and acidic residues.

The protein belongs to the PRM5 family.

The protein localises to the vacuole membrane. This is Vacuolar membrane protein YNL058C from Saccharomyces cerevisiae (strain ATCC 204508 / S288c) (Baker's yeast).